A 498-amino-acid polypeptide reads, in one-letter code: Myotilin (498 aa).

Disordered regions lie at residues 1 to 46 (MFNY…QPRQ), 64 to 151 (MSSS…HEIQ), and 202 to 241 (QDDS…NDQD). Position 20 is an omega-N-methylarginine (arginine 20). Positions 29–43 (SSFSSQTKQSSIIIQ) are enriched in low complexity. Positions 77–138 (AGSNPGQRVT…INAKPSQTAN (62 aa)) are enriched in polar residues. The segment at 79-150 (SNPGQRVTTT…PIPRTPDHEI (72 aa)) is necessary for interaction with ACTN1. A compositionally biased stretch (low complexity) spans 202 to 212 (QDDSGAQDSQQ). The segment at 215-493 (SEHARLQVPT…QRLAAQSGLY (279 aa)) is necessary for interaction with FLNC. Positions 215 to 498 (SEHARLQVPT…QSGLYESEEL (284 aa)) are necessary for interaction with ACTA1. Over residues 222 to 235 (VPTSQVRSRSTSRG) the composition is skewed to polar residues. Ig-like C2-type domains are found at residues 250–335 (PRFI…ATFT) and 349–441 (PMFI…LDVT).

Belongs to the myotilin/palladin family. As to quaternary structure, homodimer. Interacts with ACTA1, ACTN1, FLNA, FLNB, FLNC and MYOZ2. Interacts with the C-terminal region of MYOZ1. In terms of tissue distribution, expressed in skeletal muscle (at protein level). Expressed in skeletal muscle, heart, bone marrow and thyroid gland.

The protein resides in the cell membrane. The protein localises to the sarcolemma. It is found in the cytoplasm. Its subcellular location is the cytoskeleton. It localises to the myofibril. The protein resides in the sarcomere. The protein localises to the z line. Component of a complex of multiple actin cross-linking proteins. Involved in the control of myofibril assembly and stability at the Z lines in muscle cells. This is Myotilin (MYOT) from Homo sapiens (Human).